The following is a 378-amino-acid chain: Chaperone protein DnaJ 1 (378 aa).

The J domain maps to 4 to 68; that stretch reads DYYGILGVDR…DKRRIVDMGG (65 aa). The segment at 129 to 211 adopts a CR-type zinc-finger fold; that stretch reads GVKKDLTLDT…CAGDGRVRAR (83 aa). The Zn(2+) site is built by Cys142, Cys145, Cys159, Cys162, Cys185, Cys188, Cys199, and Cys202. 4 CXXCXGXG motif repeats span residues 142–149, 159–166, 185–192, and 199–206; these read CSKCHGSG, CGTCHGSG, CHTCNGTG, and CDECAGDG.

Belongs to the DnaJ family. Homodimer. Zn(2+) serves as cofactor.

It is found in the cytoplasm. In terms of biological role, participates actively in the response to hyperosmotic and heat shock by preventing the aggregation of stress-denatured proteins and by disaggregating proteins, also in an autonomous, DnaK-independent fashion. Unfolded proteins bind initially to DnaJ; upon interaction with the DnaJ-bound protein, DnaK hydrolyzes its bound ATP, resulting in the formation of a stable complex. GrpE releases ADP from DnaK; ATP binding to DnaK triggers the release of the substrate protein, thus completing the reaction cycle. Several rounds of ATP-dependent interactions between DnaJ, DnaK and GrpE are required for fully efficient folding. Also involved, together with DnaK and GrpE, in the DNA replication of plasmids through activation of initiation proteins. The protein is Chaperone protein DnaJ 1 of Corynebacterium efficiens (strain DSM 44549 / YS-314 / AJ 12310 / JCM 11189 / NBRC 100395).